The following is a 939-amino-acid chain: Translation initiation factor IF-2 (939 aa).

The disordered stretch occupies residues 57 to 274 (RLKPAAPAAP…APTKKNEQKI (218 aa)). 2 stretches are compositionally biased toward basic and acidic residues: residues 83 to 122 (MEPKEEPQKEVKESVKEAPESLPESPKEEAFEAEIPKESV) and 129 to 138 (LEQEPPKEEL). Composition is skewed to polar residues over residues 146–158 (ESASETLSDSNPL) and 170–180 (VATTLATQTDA). Basic and acidic residues predominate over residues 208-227 (KRSEEPAPKADRPSLEEART). Residues 252-262 (ARKKKKEKKKP) are compositionally biased toward basic residues. Positions 438–607 (ERPPVVTIMG…LVQSELLELK (170 aa)) constitute a tr-type G domain. Positions 447-454 (GHVDHGKT) are G1. 447–454 (GHVDHGKT) contacts GTP. Positions 472–476 (GITQH) are G2. Residues 493–496 (DTPG) are G3. GTP contacts are provided by residues 493–497 (DTPGH) and 547–550 (NKVD). Positions 547–550 (NKVD) are G4. Residues 583-585 (SAK) form a G5 region.

It belongs to the TRAFAC class translation factor GTPase superfamily. Classic translation factor GTPase family. IF-2 subfamily.

Its subcellular location is the cytoplasm. Its function is as follows. One of the essential components for the initiation of protein synthesis. Protects formylmethionyl-tRNA from spontaneous hydrolysis and promotes its binding to the 30S ribosomal subunits. Also involved in the hydrolysis of GTP during the formation of the 70S ribosomal complex. In Wolinella succinogenes (strain ATCC 29543 / DSM 1740 / CCUG 13145 / JCM 31913 / LMG 7466 / NCTC 11488 / FDC 602W) (Vibrio succinogenes), this protein is Translation initiation factor IF-2.